The following is a 120-amino-acid chain: Thiosulfate sulfurtransferase 16, chloroplastic (120 aa).

A Rhodanese domain is found at 20-120; the sequence is LLAGHRYLDV…WAKNGLPTKA (101 aa). The Cysteine persulfide intermediate role is filled by Cys80. Arg85 serves as a coordination point for substrate.

As to quaternary structure, monomer.

The protein localises to the plastid. It is found in the chloroplast. The enzyme catalyses thiosulfate + hydrogen cyanide = thiocyanate + sulfite + 2 H(+). In terms of biological role, thought to act during the early stages of leaf senescence. Catalyzes the transfer of a sulfur ion from a donor to cyanide or to other thiol compounds. Substrate preference is thiosulfate &gt; 3-mercaptopyruvate. The protein is Thiosulfate sulfurtransferase 16, chloroplastic (STR16) of Arabidopsis thaliana (Mouse-ear cress).